Consider the following 330-residue polypeptide: Pantothenate synthetase 2 (330 aa).

Residue His55 is the Proton donor of the active site. Residues Gly167 to Asp170, Val196, and Ala204 to Arg207 each bind ATP.

Belongs to the pantothenate synthetase family. As to quaternary structure, homodimer.

Its subcellular location is the cytoplasm. It catalyses the reaction (R)-pantoate + beta-alanine + ATP = (R)-pantothenate + AMP + diphosphate + H(+). It participates in cofactor biosynthesis; (R)-pantothenate biosynthesis; (R)-pantothenate from (R)-pantoate and beta-alanine: step 1/1. In terms of biological role, catalyzes the condensation of pantoate with beta-alanine in an ATP-dependent reaction via a pantoyl-adenylate intermediate. The sequence is that of Pantothenate synthetase 2 from Frankia alni (strain DSM 45986 / CECT 9034 / ACN14a).